The following is a 280-amino-acid chain: Formamidopyrimidine-DNA glycosylase (280 aa).

The Schiff-base intermediate with DNA role is filled by P2. The Proton donor role is filled by E3. Residue K60 is the Proton donor; for beta-elimination activity of the active site. Residues H93 and R112 each contribute to the DNA site. The FPG-type zinc finger occupies 240–274 (YVYGQHSKPCRVCGADIIKIKVGGRGTHLCPTCQP). Catalysis depends on R264, which acts as the Proton donor; for delta-elimination activity.

The protein belongs to the FPG family. As to quaternary structure, monomer. Requires Zn(2+) as cofactor.

It catalyses the reaction Hydrolysis of DNA containing ring-opened 7-methylguanine residues, releasing 2,6-diamino-4-hydroxy-5-(N-methyl)formamidopyrimidine.. The catalysed reaction is 2'-deoxyribonucleotide-(2'-deoxyribose 5'-phosphate)-2'-deoxyribonucleotide-DNA = a 3'-end 2'-deoxyribonucleotide-(2,3-dehydro-2,3-deoxyribose 5'-phosphate)-DNA + a 5'-end 5'-phospho-2'-deoxyribonucleoside-DNA + H(+). Functionally, involved in base excision repair of DNA damaged by oxidation or by mutagenic agents. Acts as a DNA glycosylase that recognizes and removes damaged bases. Has a preference for oxidized purines, such as 7,8-dihydro-8-oxoguanine (8-oxoG). Has AP (apurinic/apyrimidinic) lyase activity and introduces nicks in the DNA strand. Cleaves the DNA backbone by beta-delta elimination to generate a single-strand break at the site of the removed base with both 3'- and 5'-phosphates. In Oceanobacillus iheyensis (strain DSM 14371 / CIP 107618 / JCM 11309 / KCTC 3954 / HTE831), this protein is Formamidopyrimidine-DNA glycosylase.